A 246-amino-acid polypeptide reads, in one-letter code: Pyridoxine 5'-phosphate synthase (246 aa).

2 residues coordinate 3-amino-2-oxopropyl phosphate: Asn-8 and Arg-19. The Proton acceptor role is filled by His-44. Positions 46 and 51 each coordinate 1-deoxy-D-xylulose 5-phosphate. Glu-76 (proton acceptor) is an active-site residue. Thr-106 is a 1-deoxy-D-xylulose 5-phosphate binding site. The active-site Proton donor is the His-198. Residues Asp-199 and 221 to 222 (GH) each bind 3-amino-2-oxopropyl phosphate.

It belongs to the PNP synthase family. As to quaternary structure, homooctamer; tetramer of dimers.

It localises to the cytoplasm. The catalysed reaction is 3-amino-2-oxopropyl phosphate + 1-deoxy-D-xylulose 5-phosphate = pyridoxine 5'-phosphate + phosphate + 2 H2O + H(+). Its pathway is cofactor biosynthesis; pyridoxine 5'-phosphate biosynthesis; pyridoxine 5'-phosphate from D-erythrose 4-phosphate: step 5/5. Functionally, catalyzes the complicated ring closure reaction between the two acyclic compounds 1-deoxy-D-xylulose-5-phosphate (DXP) and 3-amino-2-oxopropyl phosphate (1-amino-acetone-3-phosphate or AAP) to form pyridoxine 5'-phosphate (PNP) and inorganic phosphate. This Brucella suis (strain ATCC 23445 / NCTC 10510) protein is Pyridoxine 5'-phosphate synthase.